The sequence spans 342 residues: S-adenosylmethionine:tRNA ribosyltransferase-isomerase (342 aa).

The protein belongs to the QueA family. As to quaternary structure, monomer.

It is found in the cytoplasm. It carries out the reaction 7-aminomethyl-7-carbaguanosine(34) in tRNA + S-adenosyl-L-methionine = epoxyqueuosine(34) in tRNA + adenine + L-methionine + 2 H(+). Its pathway is tRNA modification; tRNA-queuosine biosynthesis. Transfers and isomerizes the ribose moiety from AdoMet to the 7-aminomethyl group of 7-deazaguanine (preQ1-tRNA) to give epoxyqueuosine (oQ-tRNA). In Listeria innocua serovar 6a (strain ATCC BAA-680 / CLIP 11262), this protein is S-adenosylmethionine:tRNA ribosyltransferase-isomerase.